A 485-amino-acid polypeptide reads, in one-letter code: GlcNAc-binding protein A (485 aa).

The signal sequence occupies residues 1 to 29 (MKKQPQKTLLAIALSVVSGTAMSHGYVSA). The 171-residue stretch at 30-200 (VENGVAEARV…SFYNVIDVKF (171 aa)) folds into the Chitin-binding type-4 domain. The region spanning 437-478 (ADTKVLASDGAIYQCKPFPYSGYCVQWTPTATQYQPGTGSHW) is the Chitin-binding type-3 domain.

Belongs to the GbpA family.

It localises to the secreted. Functionally, probably interacts with GlcNAc residues. May promote attachment to both epithelial cell surfaces and chitin. This chain is GlcNAc-binding protein A, found in Vibrio vulnificus (strain CMCP6).